Consider the following 275-residue polypeptide: Methylesterase 10 (275 aa).

Serine 96 (acyl-ester intermediate) is an active-site residue. Catalysis depends on charge relay system residues aspartate 225 and histidine 253.

Belongs to the AB hydrolase superfamily. Methylesterase family.

The catalysed reaction is methyl (-)-jasmonate + H2O = jasmonate + methanol + H(+). Its pathway is plant hormone biosynthesis. The protein operates within lipid metabolism; oxylipin biosynthesis. Its function is as follows. Methylesterase shown to have methyl jasmonate (MeJA) esterase activity in vitro. The sequence is that of Methylesterase 10 from Arabidopsis thaliana (Mouse-ear cress).